A 72-amino-acid chain; its full sequence is Translation initiation factor IF-1 (72 aa).

The S1-like domain maps to 1-72 (MSKDDVIQMQ…SRARIVFRAK (72 aa)).

Belongs to the IF-1 family. In terms of assembly, component of the 30S ribosomal translation pre-initiation complex which assembles on the 30S ribosome in the order IF-2 and IF-3, IF-1 and N-formylmethionyl-tRNA(fMet); mRNA recruitment can occur at any time during PIC assembly.

The protein resides in the cytoplasm. Its function is as follows. One of the essential components for the initiation of protein synthesis. Stabilizes the binding of IF-2 and IF-3 on the 30S subunit to which N-formylmethionyl-tRNA(fMet) subsequently binds. Helps modulate mRNA selection, yielding the 30S pre-initiation complex (PIC). Upon addition of the 50S ribosomal subunit IF-1, IF-2 and IF-3 are released leaving the mature 70S translation initiation complex. The polypeptide is Translation initiation factor IF-1 (Methylibium petroleiphilum (strain ATCC BAA-1232 / LMG 22953 / PM1)).